The following is a 77-amino-acid chain: Secapin-2 (77 aa).

The N-terminal stretch at 1–32 (MKNYSKNATYLITVLLFSFVTMLLIIPSKCEA) is a signal peptide. Residues 33-52 (VSNDMQPLEARTADLVQQPR) constitute a propeptide that is removed on maturation. Cysteines 61 and 72 form a disulfide. Pro-77 is modified (proline amide).

Belongs to the secapin family. As to expression, expressed by the venom gland.

Its subcellular location is the secreted. In terms of biological role, serine protease inhibitor which exhibits antifibrinolytic, antielastolytic and antimicrobial activities. Displays antimicrobial activity against bacteria and fungi. Likely functions in the innate immune response to microbial infection and possibly in the venom, as an antifibrinolytic agent. Induces hyperalgesia and edema mediated by leukotrienes when injected into mice. Does not induce hemolytic activity, mast cell degranulation, or chemotactic activity for polymorphonucleated leukocytes (PMNL). The chain is Secapin-2 from Apis mellifera (Honeybee).